Reading from the N-terminus, the 976-residue chain is Mast/stem cell growth factor receptor Kit (976 aa).

The first 25 residues, 1–25 (MRGARGAWDFLCVLLLLLRVQTGSS), serve as a signal peptide directing secretion. Topologically, residues 26–524 (QPSVSPGEPS…QIHPHTLFTP (499 aa)) are extracellular. 5 Ig-like C2-type domains span residues 27–112 (PSVS…VFVR), 121–205 (DRSL…LKVR), 212–308 (PVVS…LEVV), 317–410 (PMIN…VYVN), and 413–507 (PEIL…FNFA). Residues Cys-58 and Cys-97 are joined by a disulfide bond. N-linked (GlcNAc...) asparagine glycosylation is found at Asn-130 and Asn-145. 3 disulfide bridges follow: Cys-136/Cys-186, Cys-151/Cys-183, and Cys-233/Cys-290. Asn-283, Asn-293, Asn-300, Asn-320, Asn-352, Asn-367, Asn-463, and Asn-486 each carry an N-linked (GlcNAc...) asparagine glycan. The cysteines at positions 428 and 491 are disulfide-linked. A helical membrane pass occupies residues 525 to 545 (LLIGFVIVAGMMCIIVMILTY). The Cytoplasmic portion of the chain corresponds to 546–976 (KYLQKPMYEV…SQPLLVHDDV (431 aa)). Tyr-547, Tyr-553, Tyr-568, and Tyr-570 each carry phosphotyrosine; by autocatalysis. Tyr-568 provides a ligand contact to Mg(2+). An important for interaction with phosphotyrosine-binding proteins region spans residues 568–570 (YVY). In terms of domain architecture, Protein kinase spans 589–937 (LSFGKTLGAG…ISESTNHIYS (349 aa)). Residues 596–603 (GAGAFGKV), Lys-623, and 671–677 (EYCCYGD) each bind ATP. Phosphotyrosine; by autocatalysis occurs at positions 703, 721, and 730. Phosphoserine; by PKC/PRKCA is present on residues Ser-741 and Ser-746. Residue Asp-792 is the Proton acceptor of the active site. Arg-796 contributes to the ATP binding site. Residues Asn-797 and Asp-810 each coordinate Mg(2+). Ser-821 is subject to Phosphoserine. Tyr-823 bears the Phosphotyrosine; by autocatalysis mark. Ser-891 carries the post-translational modification Phosphoserine. A phosphotyrosine; by autocatalysis mark is found at Tyr-900 and Tyr-936. Ser-959 is subject to Phosphoserine.

It belongs to the protein kinase superfamily. Tyr protein kinase family. CSF-1/PDGF receptor subfamily. In terms of assembly, monomer in the absence of bound KITLG/SCF. Homodimer in the presence of bound KITLG/SCF, forming a heterotetramer with two KITLG/SCF molecules. Interacts (via phosphorylated tyrosine residues) with the adapter proteins GRB2 and GRB7 (via SH2 domain), and SH2B2/APS. Interacts (via C-terminus) with MPDZ (via the tenth PDZ domain). Interacts (via phosphorylated tyrosine residues) with PIK3R1 and PIK3 catalytic subunit. Interacts (via phosphorylated tyrosine) with CRK (isoform Crk-II), FYN, SHC1 and MATK/CHK (via SH2 domain). Interacts with LYN and FES/FPS. Interacts (via phosphorylated tyrosine residues) with the protein phosphatases PTPN6/SHP-1 (via SH2 domain), PTPN11/SHP-2 (via SH2 domain) and PTPRU. Interacts with PLCG1. Interacts with DOK1 and TEC. Interacts (KITLG/SCF-bound) with IL1RL1. Interacts with IL1RAP (independent of stimulation with KITLG/SCF). A mast cell-specific KITLG/SCF-induced interleukin-33 signaling complex contains IL1RL1, IL1RAP, KIT and MYD88. Post-translationally, ubiquitinated by SOCS6. KIT is rapidly ubiquitinated after autophosphorylation induced by KITLG/SCF binding, leading to internalization and degradation. In terms of processing, autophosphorylated on tyrosine residues. KITLG/SCF binding enhances autophosphorylation. Isoform 1 shows low levels of tyrosine phosphorylation in the absence of added KITLG/SCF (in vitro). Kinase activity is down-regulated by phosphorylation on serine residues by protein kinase C family members. Phosphorylation at Tyr-568 is required for interaction with PTPN11/SHP-2, CRK (isoform Crk-II) and members of the SRC tyrosine-protein kinase family. Phosphorylation at Tyr-570 is required for interaction with PTPN6/SHP-1. Phosphorylation at Tyr-703, Tyr-823 and Tyr-936 is important for interaction with GRB2. Phosphorylation at Tyr-721 is important for interaction with PIK3R1. Phosphorylation at Tyr-823 and Tyr-936 is important for interaction with GRB7. In testis, detected in spermatogonia in the basal layer and in interstitial Leydig cells but not in Sertoli cells or spermatocytes inside the seminiferous tubules (at protein level). Expression is maintained in ejaculated spermatozoa (at protein level).

The protein localises to the cell membrane. It is found in the cytoplasm. It catalyses the reaction L-tyrosyl-[protein] + ATP = O-phospho-L-tyrosyl-[protein] + ADP + H(+). With respect to regulation, present in an inactive conformation in the absence of bound ligand. KITLG/SCF binding leads to dimerization and activation by autophosphorylation on tyrosine residues. Activity is down-regulated by PRKCA-mediated phosphorylation on serine residues. Inhibited by imatinib/STI-571 (Gleevec) and sunitinib; these compounds maintain the kinase in an inactive conformation. Tyrosine-protein kinase that acts as a cell-surface receptor for the cytokine KITLG/SCF and plays an essential role in the regulation of cell survival and proliferation, hematopoiesis, stem cell maintenance, gametogenesis, mast cell development, migration and function, and in melanogenesis. In response to KITLG/SCF binding, KIT can activate several signaling pathways. Phosphorylates PIK3R1, PLCG1, SH2B2/APS and CBL. Activates the AKT1 signaling pathway by phosphorylation of PIK3R1, the regulatory subunit of phosphatidylinositol 3-kinase. Activated KIT also transmits signals via GRB2 and activation of RAS, RAF1 and the MAP kinases MAPK1/ERK2 and/or MAPK3/ERK1. Promotes activation of STAT family members STAT1, STAT3, STAT5A and STAT5B. Activation of PLCG1 leads to the production of the cellular signaling molecules diacylglycerol and inositol 1,4,5-trisphosphate. KIT signaling is modulated by protein phosphatases, and by rapid internalization and degradation of the receptor. Activated KIT promotes phosphorylation of the protein phosphatases PTPN6/SHP-1 and PTPRU, and of the transcription factors STAT1, STAT3, STAT5A and STAT5B. Promotes phosphorylation of PIK3R1, CBL, CRK (isoform Crk-II), LYN, MAPK1/ERK2 and/or MAPK3/ERK1, PLCG1, SRC and SHC1. The chain is Mast/stem cell growth factor receptor Kit (KIT) from Homo sapiens (Human).